The sequence spans 83 residues: Mu-theraphotoxin-Hhn2j 3 (83 aa).

The first 21 residues, 1 to 21, serve as a signal peptide directing secretion; that stretch reads MKALMFLALAGLVLLFVVGYA. A propeptide spanning residues 22 to 48 is cleaved from the precursor; the sequence is SESEEKEFPIELLSKIFAVDVFKGEER. 3 disulfide bridges follow: cysteine 50–cysteine 65, cysteine 57–cysteine 70, and cysteine 64–cysteine 77. Leucine amide is present on leucine 81.

This sequence belongs to the neurotoxin 10 (Hwtx-1) family. 15 (Hntx-3) subfamily. Monomer. In terms of tissue distribution, expressed by the venom gland.

It localises to the secreted. Lethal neurotoxin. Selectively blocks tetrodotoxin-sensitive voltage-gated sodium channels (Nav). Does not affect tetrodotoxin-resistant voltage-gated sodium channels or calcium channels. This is Mu-theraphotoxin-Hhn2j 3 from Cyriopagopus hainanus (Chinese bird spider).